The chain runs to 176 residues: NAD(P)H-quinone oxidoreductase subunit 6, chloroplastic (176 aa).

5 helical membrane-spanning segments follow: residues 10–30 (FLLV…VLLP), 32–52 (PIYS…FYIL), 61–81 (AQLL…VMFM), 92–112 (LWTV…ISLI), and 152–172 (FFLP…GAIA).

Belongs to the complex I subunit 6 family. In terms of assembly, NDH is composed of at least 16 different subunits, 5 of which are encoded in the nucleus.

It localises to the plastid. The protein resides in the chloroplast thylakoid membrane. It catalyses the reaction a plastoquinone + NADH + (n+1) H(+)(in) = a plastoquinol + NAD(+) + n H(+)(out). The catalysed reaction is a plastoquinone + NADPH + (n+1) H(+)(in) = a plastoquinol + NADP(+) + n H(+)(out). Its function is as follows. NDH shuttles electrons from NAD(P)H:plastoquinone, via FMN and iron-sulfur (Fe-S) centers, to quinones in the photosynthetic chain and possibly in a chloroplast respiratory chain. The immediate electron acceptor for the enzyme in this species is believed to be plastoquinone. Couples the redox reaction to proton translocation, and thus conserves the redox energy in a proton gradient. This is NAD(P)H-quinone oxidoreductase subunit 6, chloroplastic (ndhG) from Solanum tuberosum (Potato).